The chain runs to 738 residues: Transcription activator of gluconeogenesis SMAC_06113 (738 aa).

The segment at 1 to 65 is disordered; the sequence is MPDDVGPAEA…KYDPKDPLRP (65 aa). Composition is skewed to basic and acidic residues over residues 28 to 39 and 51 to 64; these read ATTKDDDEKMAE and GDQKKKYDPKDPLR. Positions 74–102 form a DNA-binding region, zn(2)-C6 fungal-type; that stretch reads CYACQRAHLTCGDERPCQRCIKRGLAEAC. Disordered stretches follow at residues 255-278, 328-404, 530-579, and 636-673; these read SSGAAETPPRDPSISQQGTAGDVG, HAYA…KRQR, GTNS…KEQP, and SVPTTAGGSGSSNGTVVNGGPDSSPAGKTERERSTGAN. 2 stretches are compositionally biased toward polar residues: residues 337–351 and 530–540; these read TSLQSPSTENNSPQP and GTNSDTLSVSS. Residues 475 to 546 enclose the PAS domain; sequence ALFEHEEFMH…SVSSKGGRGG (72 aa). Composition is skewed to low complexity over residues 568–579 and 636–655; these read QQQQSQQQKEQP and SVPTTAGGSGSSNGTVVNGG.

Belongs to the ERT1/acuK family.

It is found in the nucleus. Transcription factor which regulates nonfermentable carbon utilization. Activator of gluconeogenetic genes. The chain is Transcription activator of gluconeogenesis SMAC_06113 from Sordaria macrospora (strain ATCC MYA-333 / DSM 997 / K(L3346) / K-hell).